The chain runs to 455 residues: Bifunctional protein GlmU (455 aa).

Residues 1–227 form a pyrophosphorylase region; the sequence is MGLSVIILAA…CEEVQGVNDR (227 aa). UDP-N-acetyl-alpha-D-glucosamine-binding positions include 8–11, lysine 22, glutamine 73, 78–79, 100–102, glycine 137, glutamate 152, asparagine 167, and asparagine 225; these read LAAG, GT, and YGD. A Mg(2+)-binding site is contributed by aspartate 102. Asparagine 225 lines the Mg(2+) pocket. The tract at residues 228–248 is linker; that stretch reads WELTKLERYYQRLMAKKLSLA. Residues 249–455 are N-acetyltransferase; sequence GVTIIDPERF…KGWHRPTKKE (207 aa). UDP-N-acetyl-alpha-D-glucosamine is bound by residues arginine 332 and lysine 350. The active-site Proton acceptor is histidine 362. Residues tyrosine 365 and asparagine 376 each coordinate UDP-N-acetyl-alpha-D-glucosamine. Residues alanine 379, 385 to 386, serine 404, alanine 422, and arginine 439 each bind acetyl-CoA; that span reads NY.

It in the N-terminal section; belongs to the N-acetylglucosamine-1-phosphate uridyltransferase family. The protein in the C-terminal section; belongs to the transferase hexapeptide repeat family. In terms of assembly, homotrimer. Mg(2+) serves as cofactor.

Its subcellular location is the cytoplasm. The enzyme catalyses alpha-D-glucosamine 1-phosphate + acetyl-CoA = N-acetyl-alpha-D-glucosamine 1-phosphate + CoA + H(+). It carries out the reaction N-acetyl-alpha-D-glucosamine 1-phosphate + UTP + H(+) = UDP-N-acetyl-alpha-D-glucosamine + diphosphate. It participates in nucleotide-sugar biosynthesis; UDP-N-acetyl-alpha-D-glucosamine biosynthesis; N-acetyl-alpha-D-glucosamine 1-phosphate from alpha-D-glucosamine 6-phosphate (route II): step 2/2. It functions in the pathway nucleotide-sugar biosynthesis; UDP-N-acetyl-alpha-D-glucosamine biosynthesis; UDP-N-acetyl-alpha-D-glucosamine from N-acetyl-alpha-D-glucosamine 1-phosphate: step 1/1. Its pathway is bacterial outer membrane biogenesis; LPS lipid A biosynthesis. Catalyzes the last two sequential reactions in the de novo biosynthetic pathway for UDP-N-acetylglucosamine (UDP-GlcNAc). The C-terminal domain catalyzes the transfer of acetyl group from acetyl coenzyme A to glucosamine-1-phosphate (GlcN-1-P) to produce N-acetylglucosamine-1-phosphate (GlcNAc-1-P), which is converted into UDP-GlcNAc by the transfer of uridine 5-monophosphate (from uridine 5-triphosphate), a reaction catalyzed by the N-terminal domain. In Coxiella burnetii (strain RSA 493 / Nine Mile phase I), this protein is Bifunctional protein GlmU.